The primary structure comprises 642 residues: MTRLKAKYSPTKGKRKEDKHTKRMRKSSFTRTQKMLEVFNDNRSHFNKYESLAIDVEDDDTFGNLVLMENDKSDVDIPVIEEVTSSEDEQRAESSKRNNSLEDNQDFIAFSDSSEDETEQIKEDDDERSSFLLTDEHEVSKLTSQQSLNTESACNVEYPWIRNHCHSKQRRIADWLTSEIKDFVHYISPSKNEIKCRNRTIDKLRRAVKELWSDADLHVFGSFATDLYLPGSDIDCVVNSRNRDKEDRNYIYELARHLKNKGLAIRMEVIVKTRVPIIKFIEPQSQLHIDVSFERTNGLEAAKLIREWLRDSPGLRELVLIIKQFLHSRRLNNVHTGGLGGFTVICLVYSFLNMHPRIKSNDIDVLDNLGVLLIDFFELYGKNFGYDDVAISISDGYASYIPKSCWRTLEPSRSKFSLAIQDPGDPNNNISRGSFNMKDIKKAFAGAFELLVNKCWELNSATFKDRVGKSILGNVIKYRGQKRDFNDERDLVQNKAIIENERYHKRRTRIVQEDLFINDTEDLPVEEIYKLDEPAKKKQKAKKDKREGEIKKSAIPSPPPDFGVSRSKLKRKVKKTDQGSLLHQNNLSIDDLMGLSENDQESDQDQKGRDTPSGQDEKSPLETKTVDAQTRRDYWLSKGQAL.

Disordered regions lie at residues 1–29 (MTRL…KSSF) and 84–104 (TSSE…LEDN). Basic and acidic residues predominate over residues 88 to 100 (DEQRAESSKRNNS). The Mg(2+) site is built by Asp233 and Asp235. ATP is bound by residues Gly298, Lys323, Asn428, and Arg432. Residues 368 to 428 (NLGVLLIDFF…AIQDPGDPNN (61 aa)) form the PAP-associated domain. Residues 535–642 (AKKKQKAKKD…DYWLSKGQAL (108 aa)) are disordered. The segment covering 578 to 588 (QGSLLHQNNLS) has biased composition (polar residues). 2 positions are modified to phosphoserine: Ser596 and Ser602. Positions 604-635 (QDQKGRDTPSGQDEKSPLETKTVDAQTRRDYW) are enriched in basic and acidic residues.

This sequence belongs to the DNA polymerase type-B-like family. Component of the TRAMP5 complex composed of at least AIR1, MTR4 and TFR5. Interacts with POL2, DPB2 and DPB11. Mg(2+) is required as a cofactor. It depends on Mn(2+) as a cofactor.

The protein localises to the nucleus. It localises to the nucleolus. The enzyme catalyses RNA(n) + ATP = RNA(n)-3'-adenine ribonucleotide + diphosphate. In terms of biological role, catalytic subunit of the TRAMP5 complex which has a poly(A) RNA polymerase activity and is involved in a post-transcriptional quality control mechanism limiting inappropriate expression of genetic information. Polyadenylation is required for the degradative activity of the exosome on several of its nuclear RNA substrates like cryptic transcripts generated by RNA polymerase II and III, or hypomethylated pre-tRNAi-Met. Polyadenylates RNA processing and degradation intermediates of snRNAs, snoRNAs and mRNAs that accumulate in strains lacking a functional exosome. TRF5 is also required for proper nuclear division in mitosis and sister chromatid cohesion. Involved in the regulation of histone mRNA levels. May mediate mitotic chromosome condensation. In Saccharomyces cerevisiae (strain ATCC 204508 / S288c) (Baker's yeast), this protein is Poly(A) RNA polymerase protein 1 (TRF5).